We begin with the raw amino-acid sequence, 367 residues long: MKKQRVVVKIGSSSLADSHGGISTEQLSDHVAALARLKEDGHEVVLITSGAVAAGFSALGYPSRPVTIKGKQAAAAVGQSLLMQAYTEEFRKYGIVTAQLLLTRSDFSRKEQYSNAYATLGELLNRSALPIINENDSISLEELTFGDNDMLSALVSGLVSADMLMIFTDVNGLYDKNPQKNADAKKYYFLPEVTEEISSLAGDAGSKLGTGGMKSKIDAAKTALSLGVSVFIGTGRGQEKFVDVLKGKGDGTYVGNAPQKEMKMNKQWIALHSLVSGQIEVDAGAATAIIQHGKSLLPAGVTNVLGFFQVGEVVEVVTQQGRVIGKGQCTYSAEELRDVKGMQSQDIQVRGERHSYEVIHRDHWVSL.

Lysine 9 contributes to the ATP binding site. Residues serine 49, aspartate 136, and asparagine 148 each contribute to the substrate site. ATP-binding positions include 168–169 (TD) and 210–216 (TGGMKSK). The 75-residue stretch at 276–350 (SGQIEVDAGA…GMQSQDIQVR (75 aa)) folds into the PUA domain.

The protein belongs to the glutamate 5-kinase family.

It localises to the cytoplasm. The catalysed reaction is L-glutamate + ATP = L-glutamyl 5-phosphate + ADP. It functions in the pathway amino-acid biosynthesis; L-proline biosynthesis; L-glutamate 5-semialdehyde from L-glutamate: step 1/2. In terms of biological role, catalyzes the transfer of a phosphate group to glutamate to form L-glutamate 5-phosphate. The sequence is that of Glutamate 5-kinase from Bacillus cereus (strain B4264).